The sequence spans 160 residues: Phosphopantetheine adenylyltransferase (160 aa).

Threonine 10 lines the substrate pocket. ATP-binding positions include 10–11 (TF) and histidine 18. Substrate is bound by residues lysine 42, leucine 74, and arginine 88. ATP contacts are provided by residues 89 to 91 (GLR), glutamate 99, and 124 to 130 (NSFISST).

It belongs to the bacterial CoaD family. Homohexamer. Mg(2+) is required as a cofactor.

The protein resides in the cytoplasm. It catalyses the reaction (R)-4'-phosphopantetheine + ATP + H(+) = 3'-dephospho-CoA + diphosphate. Its pathway is cofactor biosynthesis; coenzyme A biosynthesis; CoA from (R)-pantothenate: step 4/5. Its function is as follows. Reversibly transfers an adenylyl group from ATP to 4'-phosphopantetheine, yielding dephospho-CoA (dPCoA) and pyrophosphate. The sequence is that of Phosphopantetheine adenylyltransferase from Shewanella piezotolerans (strain WP3 / JCM 13877).